The chain runs to 194 residues: Large ribosomal subunit protein eL15 (194 aa).

Basic residues predominate over residues 162 to 173 (KTSAGRRARGLH). A disordered region spans residues 162–194 (KTSAGRRARGLHNRGTGTEKCRPSLTSHKNQGK). The segment covering 185-194 (SLTSHKNQGK) has biased composition (polar residues).

This sequence belongs to the eukaryotic ribosomal protein eL15 family.

The polypeptide is Large ribosomal subunit protein eL15 (Methanocorpusculum labreanum (strain ATCC 43576 / DSM 4855 / Z)).